A 1515-amino-acid chain; its full sequence is Glutamate synthase [NADPH] large chain (1515 aa).

Residues 1-36 (MTTELNQGEQFVADFRANAAALTTANAYNPEDEHDA) constitute a propeptide that is removed on maturation. The active-site For GATase activity is Cys-37. The region spanning 37-432 (CGVGFIAAID…PGEMIAVDLQ (396 aa)) is the Glutamine amidotransferase type-2 domain. A disordered region spans residues 916 to 937 (AKSDSGEGGEDPARFRPDKNGD). The segment covering 926-936 (DPARFRPDKNG) has biased composition (basic and acidic residues). Residues 1085 to 1142 (LSEV…IMVR) and 1086 to 1142 (SEVH…IMVR) contribute to the FMN site. Cys-1138, Cys-1144, and Cys-1149 together coordinate [3Fe-4S] cluster.

This sequence belongs to the glutamate synthase family. Aggregate of 4 catalytic active heterodimers, consisting of a large and a small subunit. The cofactor is [3Fe-4S] cluster. It depends on FAD as a cofactor. FMN serves as cofactor.

It catalyses the reaction 2 L-glutamate + NADP(+) = L-glutamine + 2-oxoglutarate + NADPH + H(+). It participates in amino-acid biosynthesis; L-glutamate biosynthesis via GLT pathway; L-glutamate from 2-oxoglutarate and L-glutamine (NADP(+) route): step 1/1. Its pathway is energy metabolism; nitrogen metabolism. The chain is Glutamate synthase [NADPH] large chain (gltB) from Azospirillum brasilense.